The following is a 345-amino-acid chain: Phosphoribosylformylglycinamidine cyclo-ligase (345 aa).

It belongs to the AIR synthase family.

It localises to the cytoplasm. It carries out the reaction 2-formamido-N(1)-(5-O-phospho-beta-D-ribosyl)acetamidine + ATP = 5-amino-1-(5-phospho-beta-D-ribosyl)imidazole + ADP + phosphate + H(+). The protein operates within purine metabolism; IMP biosynthesis via de novo pathway; 5-amino-1-(5-phospho-D-ribosyl)imidazole from N(2)-formyl-N(1)-(5-phospho-D-ribosyl)glycinamide: step 2/2. In Aeromonas hydrophila subsp. hydrophila (strain ATCC 7966 / DSM 30187 / BCRC 13018 / CCUG 14551 / JCM 1027 / KCTC 2358 / NCIMB 9240 / NCTC 8049), this protein is Phosphoribosylformylglycinamidine cyclo-ligase.